A 469-amino-acid chain; its full sequence is tRNA(Ile)-lysidine synthase (469 aa).

26–31 (SGGPDS) serves as a coordination point for ATP.

This sequence belongs to the tRNA(Ile)-lysidine synthase family.

Its subcellular location is the cytoplasm. It catalyses the reaction cytidine(34) in tRNA(Ile2) + L-lysine + ATP = lysidine(34) in tRNA(Ile2) + AMP + diphosphate + H(+). Functionally, ligates lysine onto the cytidine present at position 34 of the AUA codon-specific tRNA(Ile) that contains the anticodon CAU, in an ATP-dependent manner. Cytidine is converted to lysidine, thus changing the amino acid specificity of the tRNA from methionine to isoleucine. This Clostridium perfringens (strain 13 / Type A) protein is tRNA(Ile)-lysidine synthase.